We begin with the raw amino-acid sequence, 231 residues long: 2-C-methyl-D-erythritol 4-phosphate cytidylyltransferase (231 aa).

The protein belongs to the IspD/TarI cytidylyltransferase family. IspD subfamily.

It carries out the reaction 2-C-methyl-D-erythritol 4-phosphate + CTP + H(+) = 4-CDP-2-C-methyl-D-erythritol + diphosphate. It functions in the pathway isoprenoid biosynthesis; isopentenyl diphosphate biosynthesis via DXP pathway; isopentenyl diphosphate from 1-deoxy-D-xylulose 5-phosphate: step 2/6. Catalyzes the formation of 4-diphosphocytidyl-2-C-methyl-D-erythritol from CTP and 2-C-methyl-D-erythritol 4-phosphate (MEP). This is 2-C-methyl-D-erythritol 4-phosphate cytidylyltransferase from Shewanella piezotolerans (strain WP3 / JCM 13877).